The primary structure comprises 172 residues: Cytochrome c oxidase subunit 4 isoform 2, mitochondrial (172 aa).

A mitochondrion-targeting transit peptide spans 1 to 34 (MFSRAARSLVMRTGLRTRGTGTHSPGDAAGSQRR). Residues 13–22 (TGLRTRGTGT) are compositionally biased toward low complexity. Residues 13–32 (TGLRTRGTGTHSPGDAAGSQ) form a disordered region. At 35 to 101 (MTPYVDCYAQ…TFAEMNHRSN (67 aa)) the chain is on the mitochondrial matrix side. A helical transmembrane segment spans residues 102–127 (EWKTVMGCVFFFIGFTALVIWWQRVY). At 128 to 172 (VFPKKVVTLTEERKAQQLQRLLDMKSNPIQGLAAHWDYEKKEWKK) the chain is on the mitochondrial intermembrane side.

This sequence belongs to the cytochrome c oxidase IV family. Component of the cytochrome c oxidase (complex IV, CIV), a multisubunit enzyme composed of 14 subunits. The complex is composed of a catalytic core of 3 subunits MT-CO1, MT-CO2 and MT-CO3, encoded in the mitochondrial DNA, and 11 supernumerary subunits COX4I, COX5A, COX5B, COX6A, COX6B, COX6C, COX7A, COX7B, COX7C, COX8 and NDUFA4, which are encoded in the nuclear genome. The complex exists as a monomer or a dimer and forms supercomplexes (SCs) in the inner mitochondrial membrane with NADH-ubiquinone oxidoreductase (complex I, CI) and ubiquinol-cytochrome c oxidoreductase (cytochrome b-c1 complex, complex III, CIII), resulting in different assemblies (supercomplex SCI(1)III(2)IV(1) and megacomplex MCI(2)III(2)IV(2)).

It is found in the mitochondrion inner membrane. It participates in energy metabolism; oxidative phosphorylation. Functionally, component of the cytochrome c oxidase, the last enzyme in the mitochondrial electron transport chain which drives oxidative phosphorylation. The respiratory chain contains 3 multisubunit complexes succinate dehydrogenase (complex II, CII), ubiquinol-cytochrome c oxidoreductase (cytochrome b-c1 complex, complex III, CIII) and cytochrome c oxidase (complex IV, CIV), that cooperate to transfer electrons derived from NADH and succinate to molecular oxygen, creating an electrochemical gradient over the inner membrane that drives transmembrane transport and the ATP synthase. Cytochrome c oxidase is the component of the respiratory chain that catalyzes the reduction of oxygen to water. Electrons originating from reduced cytochrome c in the intermembrane space (IMS) are transferred via the dinuclear copper A center (CU(A)) of subunit 2 and heme A of subunit 1 to the active site in subunit 1, a binuclear center (BNC) formed by heme A3 and copper B (CU(B)). The BNC reduces molecular oxygen to 2 water molecules using 4 electrons from cytochrome c in the IMS and 4 protons from the mitochondrial matrix. In Mus musculus (Mouse), this protein is Cytochrome c oxidase subunit 4 isoform 2, mitochondrial (Cox4i2).